The chain runs to 61 residues: Small ribosomal subunit protein bS21 (61 aa).

It belongs to the bacterial ribosomal protein bS21 family.

This Methylacidiphilum infernorum (isolate V4) (Methylokorus infernorum (strain V4)) protein is Small ribosomal subunit protein bS21.